Here is a 1565-residue protein sequence, read N- to C-terminus: MVPESAPNGNSQPLPSCFTTTGVPSPSKPRVSELVLQRMKQFKRADPERLRHASEESPQKTALGDDVPRSPPEETVGENEYKLDATDSDAAMALALQQEFRREEASSHHDSLEEKGLFFCQMCQKNLSAMNVTRREQHVNRCLDEAEKAQRPASPRIPDCPICGKPFLTTKSRISHLKQCAVRMEVGPQLLLQAVRLQTAQPEVDGSPQVPSFSNNVGGLKRKGVTTKREPRRRKVNKPEAPSEDLLVAMALSRSEVEHCPVVPPLRLENAFSEKIRLGAEKKSRKKRPPVCPPQLVTQDSETTGRQIEDRVAQLLSEEAELSCTPPLLASKISKEELEPAGWRARLPEGKRNFLWELSALTGAWAEESFYTVGLFPPIVSQCPSKEPQLPLELPKQGEPSPRRPPASQSSLPVSHSPKIRLLSSSQRERQALQDLVDLAVEGLSSSPQPGSRGVPTGLDLVPSSLPLTGFVLPCKKTLKKDDSASLSLGLLVTDFGAMVNNPHLSDVQFQLDSGEVLYAHKFVLYARCPLLIQYVSTESFSSEEDGDLTQRALLSDVSSEAAHAFLNYLYMADTDMPPSLVPDLRSLALRFGVSDLVQLCEQVPAVVDLEGEQPEETSEDCESRAETFLELLRSVWVDNEEEVETLLKPELCEEERERVNEAEMEEIYEFAATQRKLLQWGRAADPDGSTNPHGEDGAVSEPSLAGVQSNRQLENTEHMESSGLEKEEALASWEQEGHSTPLQDQCPDWAGKAEAQDALGEATDDPSFCSRHRRGKECLPLHPNKAHGCKQPLPSNPRVSSELSQITVDHEEQSDHVRETQADMAQAPTPHSCSLVSQSSVDGSPSQSWLHLYHTSHLSPSVSQSHSSISRVASPRSLSPTTPTKQRRGSNIVTLRKDAGHHRGQQSSPIAGHRNRGILISPAKSPPIDLTQSVPEPLSPRAQDPLHFVKKEDEVILLLDSDEELEHTKTESVSKDSPEGRKVPEFSPRSSELFSVIDVEEDHEHFQSPLKREAGLQHGEEGQLGNQSALGCRDIPWLLCSQKTSLDEDSATDTSWLVPATPGVSRSRDCSSQTQIKSLKTRIPSDETAQQTPRPNLERRTMLETAQQFSVIMPHTQPITLGAFDSGRQAYRSPSHPYPRHHRLSSSQPSCPGPDFTRWSQKSSAPRPCLPNLPAADDVVEVGDSDDEVASHQGNSSPVLDGDPPGPMGDYCWNEPLSPIPIDHLNLERTGPLTTSSPSSQVLEALHSDDCHSPGLGTTPIRGSCGTLRESQERSSLAGSPEALWDDWNEEEGQSPEAPPVAQMLSTRTRKPDRPETPKGANQKKNLPPKVPITPMPRYSIMETPVLKKELDRFGVRALPKRQMVLKLKEIFQYTHQTLESDSEDEVQSPQIPAELPCRQASTTETCNPSRLPTGEPSHPDGDAQLPASQESMATSVDGSDNSFSSKSSSAEFGAAFEYSDEDKDEEVGVTASQAAIQAADTEEAVRRYIRSKPALHRQVLRYQPVELAELQAELKQNGIPVAMGKLSDILDAQCITFTTAAARKEKLKHKRRQPSGRKKKDQK.

The interval 1–87 (MVPESAPNGN…ENEYKLDATD (87 aa)) is disordered. The span at 7 to 24 (PNGNSQPLPSCFTTTGVP) shows a compositional bias: polar residues. The segment covering 43 to 58 (KRADPERLRHASEESP) has biased composition (basic and acidic residues). Ser111 bears the Phosphoserine mark. Lys115 participates in a covalent cross-link: Glycyl lysine isopeptide (Lys-Gly) (interchain with G-Cter in SUMO2). 2 UBZ4-type zinc fingers span residues 117 to 147 (LFFC…DEAE) and 157 to 185 (IPDC…VRME). 6 residues coordinate Zn(2+): Cys120, Cys123, His138, Cys142, Cys160, and Cys163. Lys171 participates in a covalent cross-link: Glycyl lysine isopeptide (Lys-Gly) (interchain with G-Cter in SUMO2). Zn(2+)-binding residues include His176 and Cys180. Disordered stretches follow at residues 203-242 (EVDG…PEAP), 279-305 (GAEK…ETTG), and 387-418 (EPQL…SHSP). Residues 220 to 236 (LKRKGVTTKREPRRRKV) show a composition bias toward basic residues. Residue Lys283 forms a Glycyl lysine isopeptide (Lys-Gly) (interchain with G-Cter in SUMO2) linkage. Over residues 296-305 (LVTQDSETTG) the composition is skewed to polar residues. The interaction with PLK1 and TERF2-TERF2IP stretch occupies residues 499 to 1565 (MVNNPHLSDV…PSGRKKKDQK (1067 aa)). Positions 506-579 (SDVQFQLDSG…LYMADTDMPP (74 aa)) constitute a BTB domain. Residue Lys649 forms a Glycyl lysine isopeptide (Lys-Gly) (interchain with G-Cter in SUMO2) linkage. 7 disordered regions span residues 683-769 (RAAD…DPSF), 789-848 (GCKQ…SPSQ), 861-943 (PSVS…SPRA), 963-989 (DEEL…EFSP), 1063-1099 (PGVS…PNLE), 1128-1212 (GRQA…MGDY), and 1249-1337 (SDDC…ITPM). Positions 715–730 (ENTEHMESSGLEKEEA) are enriched in basic and acidic residues. Over residues 798-808 (PRVSSELSQIT) the composition is skewed to polar residues. The span at 809–822 (VDHEEQSDHVRETQ) shows a compositional bias: basic and acidic residues. Low complexity-rich tracts occupy residues 833–848 (SCSL…SPSQ) and 861–875 (PSVS…RVAS). 2 positions are modified to phosphoserine: Ser845 and Ser875. Residues 877 to 894 (RSLSPTTPTKQRRGSNIV) are compositionally biased toward polar residues. Glycyl lysine isopeptide (Lys-Gly) (interchain with G-Cter in SUMO2) cross-links involve residues Lys886, Lys898, and Lys925. Phosphoserine occurs at positions 926 and 940. The span at 967–985 (EHTKTESVSKDSPEGRKVP) shows a compositional bias: basic and acidic residues. A Glycyl lysine isopeptide (Lys-Gly) (interchain with G-Cter in SUMO2) cross-link involves residue Lys983. At Ser988 the chain carries Phosphoserine. Positions 1120–1413 (ITLGAFDSGR…TTETCNPSRL (294 aa)) are interaction with MUS81. A compositionally biased stretch (acidic residues) spans 1179–1189 (DVVEVGDSDDE). Phosphoserine occurs at positions 1249 and 1254. Residues 1285–1295 (LWDDWNEEEGQ) are compositionally biased toward acidic residues. Residues Lys1349 and Lys1350 each participate in a glycyl lysine isopeptide (Lys-Gly) (interchain with G-Cter in SUMO2) cross-link. 2 disordered regions span residues 1381 to 1449 (ESDS…SSKS) and 1546 to 1565 (KEKL…KDQK). Position 1384 is a phosphoserine (Ser1384). Residues 1401 to 1412 (QASTTETCNPSR) are compositionally biased toward polar residues. The tract at residues 1406 to 1565 (ETCNPSRLPT…PSGRKKKDQK (160 aa)) is interaction with SLX1. A compositionally biased stretch (low complexity) spans 1437–1449 (SVDGSDNSFSSKS). Residues 1547 to 1565 (EKLKHKRRQPSGRKKKDQK) are compositionally biased toward basic residues.

This sequence belongs to the SLX4 family. In terms of assembly, forms a heterodimer with SLX1A/GIYD1. Interacts with ERCC4/XPF; catalytic subunit of the ERCC4-ERCC1 endonuclease. Interacts with MUS81; catalytic subunit of the MUS81-EME1 endonuclease. Interacts with MSH2; component of the MSH2-MSH3 mismatch repair complex. Interacts with TERF2-TERF2IP. Interacts with PLK1 and SLX4IP. Highly expressed in testis. Expressed in bone marrow, brain, thymus and weakly in heart, kidney and spleen.

It is found in the nucleus. Regulatory subunit that interacts with and increases the activity of different structure-specific endonucleases. Has several distinct roles in protecting genome stability by resolving diverse forms of deleterious DNA structures originating from replication and recombination intermediates and from DNA damage. Component of the SLX1-SLX4 structure-specific endonuclease that resolves DNA secondary structures generated during DNA repair and recombination. Has endonuclease activity towards branched DNA substrates, introducing single-strand cuts in duplex DNA close to junctions with ss-DNA. Has a preference for 5'-flap structures, and promotes symmetrical cleavage of static and migrating Holliday junctions (HJs). Resolves HJs by generating two pairs of ligatable, nicked duplex products. Interacts with the structure-specific ERCC4-ERCC1 endonuclease and promotes the cleavage of bubble structures. Interacts with the structure-specific MUS81-EME1 endonuclease and promotes the cleavage of 3'-flap and replication fork-like structures. SLX4 is required for recovery from alkylation-induced DNA damage and is involved in the resolution of DNA double-strand breaks. This is Structure-specific endonuclease subunit SLX4 (Slx4) from Mus musculus (Mouse).